Reading from the N-terminus, the 380-residue chain is Succinyl-diaminopimelate desuccinylase (380 aa).

H66 lines the Zn(2+) pocket. Residue D68 is part of the active site. Residue D99 coordinates Zn(2+). Catalysis depends on E135, which acts as the Proton acceptor. Positions 136, 164, and 350 each coordinate Zn(2+).

This sequence belongs to the peptidase M20A family. DapE subfamily. In terms of assembly, homodimer. Zn(2+) is required as a cofactor. Co(2+) serves as cofactor.

The enzyme catalyses N-succinyl-(2S,6S)-2,6-diaminopimelate + H2O = (2S,6S)-2,6-diaminopimelate + succinate. It participates in amino-acid biosynthesis; L-lysine biosynthesis via DAP pathway; LL-2,6-diaminopimelate from (S)-tetrahydrodipicolinate (succinylase route): step 3/3. In terms of biological role, catalyzes the hydrolysis of N-succinyl-L,L-diaminopimelic acid (SDAP), forming succinate and LL-2,6-diaminopimelate (DAP), an intermediate involved in the bacterial biosynthesis of lysine and meso-diaminopimelic acid, an essential component of bacterial cell walls. This Magnetococcus marinus (strain ATCC BAA-1437 / JCM 17883 / MC-1) protein is Succinyl-diaminopimelate desuccinylase.